The primary structure comprises 200 residues: 3-isopropylmalate dehydratase small subunit (200 aa).

The protein belongs to the LeuD family. LeuD type 1 subfamily. In terms of assembly, heterodimer of LeuC and LeuD.

The catalysed reaction is (2R,3S)-3-isopropylmalate = (2S)-2-isopropylmalate. Its pathway is amino-acid biosynthesis; L-leucine biosynthesis; L-leucine from 3-methyl-2-oxobutanoate: step 2/4. Its function is as follows. Catalyzes the isomerization between 2-isopropylmalate and 3-isopropylmalate, via the formation of 2-isopropylmaleate. The protein is 3-isopropylmalate dehydratase small subunit of Sodalis glossinidius (strain morsitans).